Reading from the N-terminus, the 372-residue chain is Heat-inducible transcription repressor HrcA (372 aa).

Residues tyrosine 300–isoleucine 334 are disordered.

Belongs to the HrcA family.

In terms of biological role, negative regulator of class I heat shock genes (grpE-dnaK-dnaJ and groELS operons). Prevents heat-shock induction of these operons. The polypeptide is Heat-inducible transcription repressor HrcA (Bifidobacterium longum (strain DJO10A)).